A 241-amino-acid polypeptide reads, in one-letter code: Polyol phosphate phosphatase PYP1 (241 aa).

D9 (nucleophile) is an active-site residue. 3 residues coordinate Mg(2+): D9, D11, and D179. The active-site Proton donor is the D11.

This sequence belongs to the HAD-like hydrolase superfamily. The cofactor is Mg(2+).

The protein localises to the cytoplasm. The protein resides in the nucleus. The catalysed reaction is D-ribitol 5-phosphate + H2O = ribitol + phosphate. It catalyses the reaction D-sorbitol 6-phosphate + H2O = D-sorbitol + phosphate. It carries out the reaction sn-glycerol 1-phosphate + H2O = glycerol + phosphate. The enzyme catalyses D-erythrose 4-phosphate + H2O = D-erythrose + phosphate. Functionally, hydrolyzes sugar alcohol (polyol) phosphates. Dephosphorylates a variety of substrates, including: sn-glycerol 1-phosphate (D-glycerol 3-phosphate), D-ribitol 5-phosphate, D-sorbitol 6-phosphate (D-glucitol 6-phosphate), and D-erythrose 4-phosphate. Prevents accumulation of toxic levels of polyol phosphates, which can impair glycolysis by inhibiting glucose-6-phosphate isomerase. The chain is Polyol phosphate phosphatase PYP1 from Saccharomyces cerevisiae (strain ATCC 204508 / S288c) (Baker's yeast).